Reading from the N-terminus, the 212-residue chain is Orotate phosphoribosyltransferase (212 aa).

Residues R97, K101, H103, and 123 to 131 (EDLISTGGS) each bind 5-phospho-alpha-D-ribose 1-diphosphate. S127 contacts orotate.

Belongs to the purine/pyrimidine phosphoribosyltransferase family. PyrE subfamily. In terms of assembly, homodimer. The cofactor is Mg(2+).

The catalysed reaction is orotidine 5'-phosphate + diphosphate = orotate + 5-phospho-alpha-D-ribose 1-diphosphate. It participates in pyrimidine metabolism; UMP biosynthesis via de novo pathway; UMP from orotate: step 1/2. Functionally, catalyzes the transfer of a ribosyl phosphate group from 5-phosphoribose 1-diphosphate to orotate, leading to the formation of orotidine monophosphate (OMP). This chain is Orotate phosphoribosyltransferase, found in Bacteroides fragilis (strain ATCC 25285 / DSM 2151 / CCUG 4856 / JCM 11019 / LMG 10263 / NCTC 9343 / Onslow / VPI 2553 / EN-2).